The chain runs to 584 residues: Ras-specific guanine nucleotide-releasing factor RalGPS1 (584 aa).

Residues 1 to 13 (MDLMNGQSSSVNI) are compositionally biased toward polar residues. 3 disordered regions span residues 1–29 (MDLMNGQSSSVNIAATASEKSSSSESLSD), 285–338 (IEPG…IPHG), and 380–407 (HVPSRGQAESSTLSSGISIGSSDGSELS). Positions 14 to 26 (AATASEKSSSSES) are enriched in low complexity. One can recognise a Ras-GEF domain in the interval 50 to 288 (TPEEYAGQIT…YKLSLKIEPG (239 aa)). The short motif at 326-329 (PTPP) is the PXXP element. A compositionally biased stretch (low complexity) spans 388–404 (ESSTLSSGISIGSSDGS). The PH domain occupies 458-570 (AVTIQGVLRR…WFKHLSAACQ (113 aa)).

Its subcellular location is the cytoplasm. The protein localises to the cell membrane. Its function is as follows. Guanine nucleotide exchange factor. May be involved in cytoskeletal organization. This chain is Ras-specific guanine nucleotide-releasing factor RalGPS1 (RALGPS1), found in Gallus gallus (Chicken).